A 773-amino-acid polypeptide reads, in one-letter code: Linolenate 9R-lipoxygenase (773 aa).

Residues 176–773 (YEWVDSKKKS…LEDLMMSINI (598 aa)) form the Lipoxygenase domain. Fe cation-binding residues include His515, His520, and Ile773.

This sequence belongs to the lipoxygenase family.

It catalyses the reaction (9Z,12Z,15Z)-octadecatrienoate + O2 = (9R,10E,12Z,15Z)-9-hydroperoxyoctadeca-10,12,15-trienoate. Its pathway is lipid metabolism; oxylipin biosynthesis. Catalyzes the conversion of alpha-linoleate to (9R,10E,12Z,15Z)-9-hydroperoxyoctadeca-10,12,15-trienoate in oxylipin biosynthesis. Also converts alpha-linoleate to (9R,10E,12Z)-9-hydroperoxyoctadeca-10,12-dienoate. This is Linolenate 9R-lipoxygenase from Nostoc sp. (strain PCC 7120 / SAG 25.82 / UTEX 2576).